The primary structure comprises 761 residues: BMP/retinoic acid-inducible neural-specific protein 1 (761 aa).

The first 19 residues, 1 to 19 (MNWRFVELLYFLFIWGRIS), serve as a signal peptide directing secretion. The region spanning 68–251 (RYKIYREFAR…FVQSALSYIM (184 aa)) is the MACPF domain. Asn-156, Asn-433, Asn-443, Asn-553, Asn-599, Asn-631, and Asn-677 each carry an N-linked (GlcNAc...) asparagine glycan.

It belongs to the BRINP family. As to expression, highly expressed in brain. Weakly expressed in heart, lung, skeletal muscle, kidney, thymus, prostate, testis and small intestine.

It localises to the cytoplasm. Functionally, plays a role in neurogenesis and brain development. May suppress cell cycle progression in postmitotic neurons by inhibiting G1/S transition. The sequence is that of BMP/retinoic acid-inducible neural-specific protein 1 (BRINP1) from Homo sapiens (Human).